A 379-amino-acid chain; its full sequence is tRNA-specific 2-thiouridylase MnmA (379 aa).

ATP is bound by residues 9 to 16 (AMSGGVDS) and M35. An interaction with target base in tRNA region spans residues 94–96 (NPD). The active-site Nucleophile is C99. An intrachain disulfide couples C99 to C195. G123 is an ATP binding site. The interaction with tRNA stretch occupies residues 145 to 147 (KDQ). The Cysteine persulfide intermediate role is filled by C195. Residues 307–308 (RY) form an interaction with tRNA region.

This sequence belongs to the MnmA/TRMU family.

Its subcellular location is the cytoplasm. The catalysed reaction is S-sulfanyl-L-cysteinyl-[protein] + uridine(34) in tRNA + AH2 + ATP = 2-thiouridine(34) in tRNA + L-cysteinyl-[protein] + A + AMP + diphosphate + H(+). In terms of biological role, catalyzes the 2-thiolation of uridine at the wobble position (U34) of tRNA, leading to the formation of s(2)U34. The protein is tRNA-specific 2-thiouridylase MnmA of Xylella fastidiosa (strain 9a5c).